Here is a 2026-residue protein sequence, read N- to C-terminus: Fatty acid synthase subunit beta (2026 aa).

The tract at residues isoleucine 148 to alanine 526 is acetyltransferase (AT) domain. The For acetyltransferase activity role is filled by serine 268. The segment at serine 579–aspartate 824 is enoyl reductase (ER) domain. A dehydratase (DH) domain region spans residues serine 1130–isoleucine 1604. One can recognise a MaoC-like domain in the interval proline 1512 to threonine 1625. A malonyl/palmitoyl transferase (MT/PT) domain region spans residues tyrosine 1643–serine 2016. The For malonyltransferase activity role is filled by serine 1788.

Belongs to the fungal fatty acid synthetase subunit beta family. [Alpha(6)beta(6)] hexamers of two multifunctional subunits (alpha and beta).

It carries out the reaction acetyl-CoA + n malonyl-CoA + 2n NADPH + 4n H(+) = a long-chain-acyl-CoA + n CoA + n CO2 + 2n NADP(+).. It catalyses the reaction holo-[ACP] + acetyl-CoA = acetyl-[ACP] + CoA. The catalysed reaction is holo-[ACP] + malonyl-CoA = malonyl-[ACP] + CoA. The enzyme catalyses a (3R)-hydroxyacyl-[ACP] = a (2E)-enoyl-[ACP] + H2O. It carries out the reaction a 2,3-saturated acyl-[ACP] + NAD(+) = a (2E)-enoyl-[ACP] + NADH + H(+). It catalyses the reaction (9Z)-octadecenoyl-[ACP] + H2O = (9Z)-octadecenoate + holo-[ACP] + H(+). The protein operates within secondary metabolite biosynthesis. Its function is as follows. Fatty acid synthase beta subunit; part of the gene cluster that mediates the biosynthesis of oryzines, natural products with an unusual maleidride backbone. The two subunits of the fungal fatty acid synthase oryfasA and oryfasB probably form octenoic acid. This fatty acid is most likely activated by the acyl-CoA ligase oryP to give octenyl-CoA before the citrate synthase-like protein oryE catalyzes condensation with oxaloacetate to form tricarboxylic acid. The next steps of the pathways are conjectural, but a favorite possible route has been proposed, beginning with decarboxylation and concomitant dehydration by the decarboxylase oryM, followed by tautomerization, which may lead to the production of a diene intermediate. Reduction of this diene intermediate could give the known metabolite piliformic acid. On the pathway to oryzine B and oryzine A, however, hydroxylation of the diene by the alpha-ketoglutarate-dependent dioxygenase oryG and lactonisation by the lactonohydrolases oryH or oryL could give oryzine B directly. Finally, enoyl reduction by the dehydrogenase oryD would then convert oryzine B into oryzine A. In Aspergillus oryzae (strain ATCC 42149 / RIB 40) (Yellow koji mold), this protein is Fatty acid synthase subunit beta.